Here is a 297-residue protein sequence, read N- to C-terminus: 4-hydroxy-tetrahydrodipicolinate synthase (297 aa).

Threonine 47 contacts pyruvate. Tyrosine 136 (proton donor/acceptor) is an active-site residue. Lysine 165 (schiff-base intermediate with substrate) is an active-site residue. Threonine 206 is a binding site for pyruvate.

It belongs to the DapA family. As to quaternary structure, homotetramer; dimer of dimers.

Its subcellular location is the cytoplasm. The catalysed reaction is L-aspartate 4-semialdehyde + pyruvate = (2S,4S)-4-hydroxy-2,3,4,5-tetrahydrodipicolinate + H2O + H(+). It functions in the pathway amino-acid biosynthesis; L-lysine biosynthesis via DAP pathway; (S)-tetrahydrodipicolinate from L-aspartate: step 3/4. In terms of biological role, catalyzes the condensation of (S)-aspartate-beta-semialdehyde [(S)-ASA] and pyruvate to 4-hydroxy-tetrahydrodipicolinate (HTPA). In Sulfurovum sp. (strain NBC37-1), this protein is 4-hydroxy-tetrahydrodipicolinate synthase.